Reading from the N-terminus, the 400-residue chain is Large envelope protein (400 aa).

Residue glycine 2 is the site of N-myristoyl glycine; by host attachment. The tract at residues 2-119 (GGWLPKPRKG…PPLRDSHPQA (118 aa)) is pre-S1. The tract at residues 2–174 (GGWLPKPRKG…SSRTGDPAPT (173 aa)) is pre-S. The Virion surface; in external conformation portion of the chain corresponds to 2–181 (GGWLPKPRKG…APTMENITSG (180 aa)). Residues 2–253 (GGWLPKPRKG…PGYRWMCLRR (252 aa)) lie on the Intravirion; in internal conformation side of the membrane. The disordered stretch occupies residues 84–115 (TLTTVPAVPPPASANRQSGRQPTPISPPLRDS). Polar residues predominate over residues 97-106 (ANRQSGRQPT). Residues 120–174 (IKWNSPAFHQALQDPRVKGLYFPAGGSSSGTVSPVPNIASHISSISSRTGDPAPT) form a pre-S2 region. A helical transmembrane segment spans residues 182–202 (FLGPLLVLQAGFFLLTRILTI). Over 203–253 (PQSLDSWWTSLNFLGGSPVCLGQNSQSPTSNHSPTSCPPICPGYRWMCLRR) the chain is Intravirion; in external conformation. The chain crosses the membrane as a helical span at residues 254 to 274 (FIIFLFILLLCLIFLLVLLDY). Residues 275–348 (QGMLPVCPLI…WASVRFSWLS (74 aa)) lie on the Virion surface side of the membrane. Asparagine 320 carries an N-linked (GlcNAc...) asparagine; by host glycan. Residues 349–369 (LLVPFVQWFVGLSPTVWLSVI) form a helical membrane-spanning segment. Topologically, residues 370 to 375 (WMMWYW) are intravirion. A helical transmembrane segment spans residues 376 to 398 (GPRLYNILSPFIPLLPIFFCLWV). Residues 399–400 (YI) are Virion surface-facing.

This sequence belongs to the orthohepadnavirus major surface antigen family. Li-HBsAg interacts with capsid protein and with HDV Large delta antigen. Isoform M associates with host chaperone CANX through its pre-S2 N glycan. This association may be essential for M proper secretion. Isoform M is N-terminally acetylated by host at a ratio of 90%, and N-glycosylated by host at the pre-S2 region. Post-translationally, myristoylated.

The protein resides in the virion membrane. In terms of biological role, the large envelope protein exists in two topological conformations, one which is termed 'external' or Le-HBsAg and the other 'internal' or Li-HBsAg. In its external conformation the protein attaches the virus to cell receptors and thereby initiating infection. This interaction determines the species specificity and liver tropism. This attachment induces virion internalization predominantly through caveolin-mediated endocytosis. The large envelope protein also assures fusion between virion membrane and endosomal membrane. In its internal conformation the protein plays a role in virion morphogenesis and mediates the contact with the nucleocapsid like a matrix protein. The middle envelope protein plays an important role in the budding of the virion. It is involved in the induction of budding in a nucleocapsid independent way. In this process the majority of envelope proteins bud to form subviral lipoprotein particles of 22 nm of diameter that do not contain a nucleocapsid. This chain is Large envelope protein, found in Hepatitis B virus genotype A3 (isolate Cameroon/CMR983/1994) (HBV-A).